The chain runs to 91 residues: Large ribosomal subunit protein bL27 (91 aa).

The segment at 1–22 (MAHKKAGGSSRNGRDSAGRRLG) is disordered.

It belongs to the bacterial ribosomal protein bL27 family.

The sequence is that of Large ribosomal subunit protein bL27 from Methylocella silvestris (strain DSM 15510 / CIP 108128 / LMG 27833 / NCIMB 13906 / BL2).